Consider the following 462-residue polypeptide: tRNA-2-methylthio-N(6)-dimethylallyladenosine synthase (462 aa).

The MTTase N-terminal domain occupies 18 to 138 (RKVFVKTYGC…LPNALARVRS (121 aa)). The [4Fe-4S] cluster site is built by C27, C63, C101, C179, C183, and C186. The Radical SAM core domain maps to 165–397 (RKRGVSAFLT…QALLSEQQYA (233 aa)). The TRAM domain occupies 400 to 462 (DSMIGREMDV…TNSLIAQKLA (63 aa)).

The protein belongs to the methylthiotransferase family. MiaB subfamily. In terms of assembly, monomer. [4Fe-4S] cluster is required as a cofactor.

The protein resides in the cytoplasm. It catalyses the reaction N(6)-dimethylallyladenosine(37) in tRNA + (sulfur carrier)-SH + AH2 + 2 S-adenosyl-L-methionine = 2-methylsulfanyl-N(6)-dimethylallyladenosine(37) in tRNA + (sulfur carrier)-H + 5'-deoxyadenosine + L-methionine + A + S-adenosyl-L-homocysteine + 2 H(+). Catalyzes the methylthiolation of N6-(dimethylallyl)adenosine (i(6)A), leading to the formation of 2-methylthio-N6-(dimethylallyl)adenosine (ms(2)i(6)A) at position 37 in tRNAs that read codons beginning with uridine. This Brucella anthropi (strain ATCC 49188 / DSM 6882 / CCUG 24695 / JCM 21032 / LMG 3331 / NBRC 15819 / NCTC 12168 / Alc 37) (Ochrobactrum anthropi) protein is tRNA-2-methylthio-N(6)-dimethylallyladenosine synthase.